We begin with the raw amino-acid sequence, 218 residues long: Cell division protein SepF (218 aa).

The segment at 25–115 (DVAASTDNVI…IANRREQYQQ (91 aa)) is disordered. Residues 29–43 (STDNVIPRSQQSVRA) are compositionally biased toward polar residues. Over residues 47–63 (PKQEPRNNHVQQDHQAR) the composition is skewed to basic and acidic residues.

It belongs to the SepF family. In terms of assembly, homodimer. Interacts with FtsZ.

It localises to the cytoplasm. Cell division protein that is part of the divisome complex and is recruited early to the Z-ring. Probably stimulates Z-ring formation, perhaps through the cross-linking of FtsZ protofilaments. Its function overlaps with FtsA. The chain is Cell division protein SepF from Streptococcus pyogenes serotype M12 (strain MGAS2096).